Reading from the N-terminus, the 377-residue chain is Spermidine/putrescine import ATP-binding protein PotA (377 aa).

Residues 18-248 (IRLSGISKSF…PKNLFVARFI (231 aa)) enclose the ABC transporter domain. Residue 50 to 57 (GPSGCGKT) participates in ATP binding.

It belongs to the ABC transporter superfamily. Spermidine/putrescine importer (TC 3.A.1.11.1) family. As to quaternary structure, the complex is composed of two ATP-binding proteins (PotA), two transmembrane proteins (PotB and PotC) and a solute-binding protein (PotD).

The protein localises to the cell inner membrane. The catalysed reaction is ATP + H2O + polyamine-[polyamine-binding protein]Side 1 = ADP + phosphate + polyamineSide 2 + [polyamine-binding protein]Side 1.. Functionally, part of the ABC transporter complex PotABCD involved in spermidine/putrescine import. Responsible for energy coupling to the transport system. The polypeptide is Spermidine/putrescine import ATP-binding protein PotA (Vibrio cholerae serotype O1 (strain ATCC 39315 / El Tor Inaba N16961)).